The primary structure comprises 569 residues: ATP-dependent RNA helicase dhh1 (569 aa).

Over residues 1–16 the composition is skewed to polar residues; that stretch reads MSDQLADQLKATSLSS. The interval 1–39 is disordered; sequence MSDQLADQLKATSLSSGPEDWKKGLNLPARDTRQQTEDV. The Q motif motif lies at 45–73; it reads LDWEDFIHDRDLLMGIFEAGFEKPSPIQE. Residues 76 to 246 enclose the Helicase ATP-binding domain; that stretch reads IPVALTGRDI…DKNMTSPYEI (171 aa). Residue 89-96 coordinates ATP; the sequence is AKNGTGKT. Residues 194–197 carry the DEAD box motif; that stretch reads DEAD. In terms of domain architecture, Helicase C-terminal spans 256–416; sequence GITQYYAFVE…PIPQTIDKSL (161 aa). A disordered region spans residues 436-569; that stretch reads AQQPQQQLQQ…GQPQGPLSAQ (134 aa). Residues 437 to 482 show a composition bias toward low complexity; the sequence is QQPQQQLQQSQRPQQSQQQQHFSTQTQPSNQLPPQQGNQQLGFNPQ. Residues 495-520 show a composition bias toward polar residues; that stretch reads GDWQGQNGRQNGTGASNNQPRPTNYQ. Gly residues predominate over residues 529 to 542; it reads SRGGRGRGFQGQGG. Residues 543-569 show a composition bias toward low complexity; that stretch reads RQNQNYGGQRGPRTQGQGQPQGPLSAQ.

The protein belongs to the DEAD box helicase family. DDX6/DHH1 subfamily.

The protein localises to the cytoplasm. It localises to the P-body. It catalyses the reaction ATP + H2O = ADP + phosphate + H(+). Functionally, ATP-dependent RNA helicase involved in mRNA turnover, and more specifically in mRNA decapping. Is involved in G1/S DNA-damage checkpoint recovery, probably through the regulation of the translational status of a subset of mRNAs. May also have a role in translation and mRNA nuclear export. This Neurospora crassa (strain ATCC 24698 / 74-OR23-1A / CBS 708.71 / DSM 1257 / FGSC 987) protein is ATP-dependent RNA helicase dhh1 (drh-10).